Consider the following 37-residue polypeptide: Large ribosomal subunit protein bL36 (37 aa).

This sequence belongs to the bacterial ribosomal protein bL36 family.

This is Large ribosomal subunit protein bL36 from Nocardioides sp. (strain ATCC BAA-499 / JS614).